The sequence spans 433 residues: uncharacterized protein (433 aa).

The segment at 1-126 (MAAHIALIAH…VIKLLGKTKT (126 aa)) is methylglyoxal synthase. The 145-residue stretch at 1–145 (MAAHIALIAH…GQGNVERELD (145 aa)) folds into the MGS-like domain. D62 is a catalytic residue. The DAGKc domain maps to 127 to 262 (GHLIFNPVAG…VDTALCNDIP (136 aa)).

In the N-terminal section; belongs to the methylglyoxal synthase family.

This is an uncharacterized protein from Synechocystis sp. (strain ATCC 27184 / PCC 6803 / Kazusa).